The sequence spans 309 residues: MKKEEKKENKKREQNQISSKKWNEWLAGLIDGAGKFTLSKSGYANLDILLELRDEKCHIELKQRFGGEIKRKETTLIRYRVHRLYGIRQLIACVNGHIRHPLRKIEFKEICMHYNVEYKEPETLTFANGWLSGYFDAVGLIEFSTEQDQLYLAFRHKKNTMLNELEIQKCLGVNLTCEQNGCSCESVTLYKINKKTVLSLYKYFKKYRLRSSIKTTQILLIPQFYEIQNETKEINDMQVKQKLWKQFFKKWYVDEMVKYESVKLANYYKSKTSPEKRVKKLIKLKFHRNERIRKRAERLELQKEKEKKA.

It belongs to the LAGLIDADG endonuclease family.

It localises to the mitochondrion. Its function is as follows. Mitochondrial DNA endonuclease involved in intron homing. Cleaves only one strand of intronless DNA sequence at the site which coincides with the I-SceII cleavage recognition site. This is Intron-encoded DNA endonuclease ai2a (ai2a) from Dictyostelium discoideum (Social amoeba).